Here is a 404-residue protein sequence, read N- to C-terminus: Neutral protease 2 homolog AFLA_065450 (404 aa).

The N-terminal stretch at Met1–Ala19 is a signal peptide. The propeptide occupies Val20–Arg185. 2 disulfides stabilise this stretch: Cys191/Cys263 and Cys270/Cys288. Residue His313 participates in Zn(2+) binding. Glu314 is a catalytic residue. The Zn(2+) site is built by His317 and Asp328.

This sequence belongs to the peptidase M35 family. Zn(2+) serves as cofactor.

The protein localises to the secreted. The catalysed reaction is Preferential cleavage of bonds with hydrophobic residues in P1'. Also 3-Asn-|-Gln-4 and 8-Gly-|-Ser-9 bonds in insulin B chain.. Functionally, secreted metalloproteinase that allows assimilation of proteinaceous substrates. Shows high activities on basic nuclear substrates such as histone and protamine. This chain is Neutral protease 2 homolog AFLA_065450, found in Aspergillus flavus (strain ATCC 200026 / FGSC A1120 / IAM 13836 / NRRL 3357 / JCM 12722 / SRRC 167).